Reading from the N-terminus, the 938-residue chain is Protein NLP3 (938 aa).

Disordered regions lie at residues 1–26 (MEVD…GGGD) and 557–597 (LADD…KAEK). Gly residues predominate over residues 12–26 (AGEGGGGGIGGGGGD). Residues 580-597 (SLHKSNKPPERRRGKAEK) are compositionally biased toward basic and acidic residues. An RWP-RK domain is found at 585–666 (NKPPERRRGK…IESVQGSDAA (82 aa)). Positions 640-662 (SRKINKVNRSLSKLKQVIESVQG) form a coiled coil. Residues 743–769 (DKASHSRSSSGEGSINSRTSEASCHGS) form a disordered region. A compositionally biased stretch (low complexity) spans 748–762 (SRSSSGEGSINSRTS). In terms of domain architecture, PB1 spans 847-926 (TVTIKASFKE…HVIRLLVSDV (80 aa)).

Its subcellular location is the nucleus. Its function is as follows. Probable transcription factor. The chain is Protein NLP3 (NLP3) from Oryza sativa subsp. japonica (Rice).